Consider the following 352-residue polypeptide: Aromatic amino acid aminotransferase (352 aa).

Lys-217 bears the N6-(pyridoxal phosphate)lysine mark.

This sequence belongs to the class-II pyridoxal-phosphate-dependent aminotransferase family. In terms of assembly, homodimer. The cofactor is pyridoxal 5'-phosphate.

It carries out the reaction an aromatic L-alpha-amino acid + 2-oxoglutarate = an aromatic oxo-acid + L-glutamate. In terms of biological role, aminotransferase that catalyzes the conversion of aromatic amino acids and 2-oxoglutarate into corresponding aromatic oxo acids and L-glutamate. This is Aromatic amino acid aminotransferase from Cutibacterium acnes (strain DSM 16379 / KPA171202) (Propionibacterium acnes).